The sequence spans 119 residues: Flagellar transcriptional regulator FlhD (119 aa).

It belongs to the FlhD family. Homodimer; disulfide-linked. Forms a heterohexamer composed of two FlhC and four FlhD subunits. Each FlhC binds a FlhD dimer, forming a heterotrimer, and a hexamer assembles by dimerization of two heterotrimers.

Its subcellular location is the cytoplasm. Functions in complex with FlhC as a master transcriptional regulator that regulates transcription of several flagellar and non-flagellar operons by binding to their promoter region. Activates expression of class 2 flagellar genes, including fliA, which is a flagellum-specific sigma factor that turns on the class 3 genes. Also regulates genes whose products function in a variety of physiological pathways. The polypeptide is Flagellar transcriptional regulator FlhD (Serratia marcescens).